The chain runs to 158 residues: NAD(P)H-quinone oxidoreductase subunit J, chloroplastic (158 aa).

Belongs to the complex I 30 kDa subunit family. NDH is composed of at least 16 different subunits, 5 of which are encoded in the nucleus.

The protein resides in the plastid. The protein localises to the chloroplast thylakoid membrane. It catalyses the reaction a plastoquinone + NADH + (n+1) H(+)(in) = a plastoquinol + NAD(+) + n H(+)(out). It carries out the reaction a plastoquinone + NADPH + (n+1) H(+)(in) = a plastoquinol + NADP(+) + n H(+)(out). In terms of biological role, NDH shuttles electrons from NAD(P)H:plastoquinone, via FMN and iron-sulfur (Fe-S) centers, to quinones in the photosynthetic chain and possibly in a chloroplast respiratory chain. The immediate electron acceptor for the enzyme in this species is believed to be plastoquinone. Couples the redox reaction to proton translocation, and thus conserves the redox energy in a proton gradient. This is NAD(P)H-quinone oxidoreductase subunit J, chloroplastic from Nasturtium officinale (Watercress).